The chain runs to 216 residues: MHVIYGGTFDPIHHGHLRLALEVSEALEVSRVHLVPSHIPPHRGSTGASSAQRLEMIRQAIAGEPALALDEQEVHRGGASYTADTLRQLRAELGPDCPLVMVVGTDAFSSFDRWREWQEIPGLAHIVVVRRPGSELPVGSEAAQLVAERCVGSASELHSRPAGLVLELAPPLLDISATGIRRRIAAGRSPRYLTPDDVCQSIRAWGLYGARPVEGQ.

The protein belongs to the NadD family.

The enzyme catalyses nicotinate beta-D-ribonucleotide + ATP + H(+) = deamido-NAD(+) + diphosphate. Its pathway is cofactor biosynthesis; NAD(+) biosynthesis; deamido-NAD(+) from nicotinate D-ribonucleotide: step 1/1. Catalyzes the reversible adenylation of nicotinate mononucleotide (NaMN) to nicotinic acid adenine dinucleotide (NaAD). The chain is Probable nicotinate-nucleotide adenylyltransferase from Marinobacter nauticus (strain ATCC 700491 / DSM 11845 / VT8) (Marinobacter aquaeolei).